A 208-amino-acid chain; its full sequence is High frequency lysogenization protein HflD homolog (208 aa).

Belongs to the HflD family.

The protein resides in the cytoplasm. It localises to the cell inner membrane. The chain is High frequency lysogenization protein HflD homolog from Pseudomonas putida (strain ATCC 700007 / DSM 6899 / JCM 31910 / BCRC 17059 / LMG 24140 / F1).